Here is a 171-residue protein sequence, read N- to C-terminus: MSKDMLVNDGIRAREVRLIDQDGEQLGVKSKIDALQIAEKANLDLVLVAPTAKPPVARIMDYGKFRFEQQKKDKEARKNQKVIVMKEVRLSPTIDEHDFDTKLRNARKFLEKGDKVKCSIRFKGRAITHKEIGQKVLDRFAKACEDLCTIEQRPKMDGRSMFLVLAPLHEK.

Belongs to the IF-3 family. Monomer.

Its subcellular location is the cytoplasm. In terms of biological role, IF-3 binds to the 30S ribosomal subunit and shifts the equilibrium between 70S ribosomes and their 50S and 30S subunits in favor of the free subunits, thus enhancing the availability of 30S subunits on which protein synthesis initiation begins. The sequence is that of Translation initiation factor IF-3 from Listeria innocua serovar 6a (strain ATCC BAA-680 / CLIP 11262).